Reading from the N-terminus, the 165-residue chain is MNLSKTGLPFLWISAVAFFTDLITKLAVVKNFSLYESINILPFFNLTYVRNHGAAFSFLADHAGWQKYFFILLALVVSFMILFFLYKNQATQKLQNTGYALMVGGALANAADRAYHGFVVDFFDFYWQQWHYPVFNIADVAICIGAGLLAIDAFKQNDKKESKQN.

3 helical membrane-spanning segments follow: residues 9 to 29 (PFLW…LAVV), 65 to 85 (WQKY…LFFL), and 97 to 119 (TGYA…HGFV). Active-site residues include aspartate 121 and aspartate 139. Residues 134-154 (VFNIADVAICIGAGLLAIDAF) traverse the membrane as a helical segment.

This sequence belongs to the peptidase A8 family.

It is found in the cell inner membrane. It carries out the reaction Release of signal peptides from bacterial membrane prolipoproteins. Hydrolyzes -Xaa-Yaa-Zaa-|-(S,diacylglyceryl)Cys-, in which Xaa is hydrophobic (preferably Leu), and Yaa (Ala or Ser) and Zaa (Gly or Ala) have small, neutral side chains.. The protein operates within protein modification; lipoprotein biosynthesis (signal peptide cleavage). Functionally, this protein specifically catalyzes the removal of signal peptides from prolipoproteins. This chain is Lipoprotein signal peptidase, found in Histophilus somni (strain 129Pt) (Haemophilus somnus).